A 166-amino-acid chain; its full sequence is Phosphopantetheine adenylyltransferase (166 aa).

Ser-9 is a binding site for substrate. Residues 9–10 (SF) and His-17 each bind ATP. Lys-41, Thr-74, and Arg-88 together coordinate substrate. ATP contacts are provided by residues 89–91 (GLR), Glu-99, and 124–130 (DSFISSS).

The protein belongs to the bacterial CoaD family. In terms of assembly, homohexamer. Mg(2+) serves as cofactor.

The protein localises to the cytoplasm. It catalyses the reaction (R)-4'-phosphopantetheine + ATP + H(+) = 3'-dephospho-CoA + diphosphate. The protein operates within cofactor biosynthesis; coenzyme A biosynthesis; CoA from (R)-pantothenate: step 4/5. Its function is as follows. Reversibly transfers an adenylyl group from ATP to 4'-phosphopantetheine, yielding dephospho-CoA (dPCoA) and pyrophosphate. The sequence is that of Phosphopantetheine adenylyltransferase from Lactobacillus gasseri (strain ATCC 33323 / DSM 20243 / BCRC 14619 / CIP 102991 / JCM 1131 / KCTC 3163 / NCIMB 11718 / NCTC 13722 / AM63).